The chain runs to 411 residues: Glycogen synthase kinase-3 homolog MsK-3 (411 aa).

The region spanning 74–358 is the Protein kinase domain; sequence YMAERVVGHG…ALEALVHPFY (285 aa). ATP contacts are provided by residues 80 to 88 and Lys-103; that span reads VGHGSFGVV. The active-site Proton acceptor is Asp-199. A Phosphotyrosine modification is found at Tyr-234.

This sequence belongs to the protein kinase superfamily. CMGC Ser/Thr protein kinase family. GSK-3 subfamily. As to expression, absent in leaves and petioles, very low levels are seen in the stems and roots while a moderate expression is seen in the nodes.

It carries out the reaction L-seryl-[protein] + ATP = O-phospho-L-seryl-[protein] + ADP + H(+). It catalyses the reaction L-threonyl-[protein] + ATP = O-phospho-L-threonyl-[protein] + ADP + H(+). The sequence is that of Glycogen synthase kinase-3 homolog MsK-3 (MSK-3) from Medicago sativa (Alfalfa).